Here is a 630-residue protein sequence, read N- to C-terminus: Sodium-dependent serotonin transporter (630 aa).

Polar residues-rich tracts occupy residues methionine 1–valine 11 and glutamine 42–alanine 55. The interval methionine 1–threonine 63 is disordered. Over methionine 1–aspartate 87 the chain is Cytoplasmic. A Phosphotyrosine modification is found at tyrosine 47. The chain crosses the membrane as a helical span at residues phenylalanine 88–asparagine 112. The Na(+) site is built by glycine 94, alanine 96, valine 97, aspartate 98, and asparagine 101. Residue aspartate 98 coordinates serotonin. The Extracellular segment spans residues glycine 113–glycine 115. A helical transmembrane segment spans residues alanine 116–methionine 135. Over glutamate 136 to glycine 160 the chain is Cytoplasmic. Position 142 is a phosphotyrosine (tyrosine 142). The helical transmembrane segment at isoleucine 161 to tyrosine 186 threads the bilayer. At leucine 187 to serine 252 the chain is on the extracellular side. The cysteines at positions 200 and 209 are disulfide-linked. Residues asparagine 208 and asparagine 217 are each glycosylated (N-linked (GlcNAc...) asparagine). The chain crosses the membrane as a helical span at residues tryptophan 253–tryptophan 271. Over lysine 272–serine 277 the chain is Cytoplasmic. Threonine 276 is subject to Phosphothreonine. The chain crosses the membrane as a helical span at residues glycine 278 to valine 297. At arginine 298–glycine 324 the chain is on the extracellular side. Residues valine 325 to phenylalanine 347 form a helical membrane-spanning segment. Serine 336 contributes to the Na(+) binding site. Residues alanine 348–aspartate 360 are Cytoplasmic-facing. Residues alanine 361–phenylalanine 380 form a helical membrane-spanning segment. Asparagine 368 contacts Na(+). The Extracellular segment spans residues threonine 381–threonine 421. Residues phenylalanine 422–leucine 443 traverse the membrane as a helical segment. Na(+)-binding residues include leucine 434, aspartate 437, and serine 438. A serotonin-binding site is contributed by threonine 439. At glutamate 444 to glutamate 463 the chain is on the cytoplasmic side. A helical membrane pass occupies residues tryptophan 464–serine 483. Over glycine 484–glutamate 494 the chain is Extracellular. Serotonin contacts are provided by glutamate 494 and tyrosine 495. A helical transmembrane segment spans residues tyrosine 495–tyrosine 516. Topologically, residues glycine 517–arginine 538 are cytoplasmic. Residues isoleucine 539–methionine 558 form a helical membrane-spanning segment. Serotonin-binding residues include phenylalanine 556 and serine 559. At serine 559–serine 574 the chain is on the extracellular side. Residues isoleucine 575–tyrosine 595 traverse the membrane as a helical segment. Topologically, residues arginine 596–valine 630 are cytoplasmic. The interaction with RAB4A stretch occupies residues threonine 616 to aspartate 624.

The protein belongs to the sodium:neurotransmitter symporter (SNF) (TC 2.A.22) family. SLC6A4 subfamily. In terms of assembly, monomer or homooligomer. Interacts (via C-terminus) with SCAMP2; the interaction is direct and retains transporter molecules intracellularly. Interacts with filamentous actin and STX1A. Interacts (via the N-terminus) with STX1A (via the H3 domain); this interaction regulates SLC4A6 channel conductance. Interacts with SEC23A, SEC24C and PATJ. Interacts with NOS1; the interaction may diminish the cell surface localization of SERT in the brain and, correspondingly, reduce serotonin reuptake. Interacts with TGFB1I1. Interacts with ITGAV:ITGB3. Interacts (via C-terminus) with ITGB3; this interaction regulates SLC6A4 trafficking. In terms of processing, phosphorylation at Thr-276 increases 5-HT uptake and is required for cGMP-mediated SERT regulation. In terms of tissue distribution, expressed in the lung, midbrain and brainstem regions. Expressed in brainstem raphe neurons.

The protein resides in the cell membrane. The protein localises to the endomembrane system. It localises to the endosome membrane. It is found in the synapse. Its subcellular location is the cell junction. The protein resides in the focal adhesion. The protein localises to the cell projection. It localises to the neuron projection. The enzyme catalyses serotonin(out) + K(+)(in) + Na(+)(out) + H(+)(in) = serotonin(in) + K(+)(out) + Na(+)(in) + H(+)(out). Functionally, serotonin transporter that cotransports serotonin with one Na(+) ion in exchange for one K(+) ion and possibly one proton in an overall electroneutral transport cycle. Transports serotonin across the plasma membrane from the extracellular compartment to the cytosol thus limiting serotonin intercellular signaling. Essential for serotonin homeostasis in the central nervous system. In the developing somatosensory cortex, acts in glutamatergic neurons to control serotonin uptake and its trophic functions accounting for proper spatial organization of cortical neurons and elaboration of sensory circuits. In the mature cortex, acts primarily in brainstem raphe neurons to mediate serotonin uptake from the synaptic cleft back into the pre-synaptic terminal thus terminating serotonin signaling at the synapse. Modulates mucosal serotonin levels in the gastrointestinal tract through uptake and clearance of serotonin in enterocytes. Required for enteric neurogenesis and gastrointestinal reflexes. Regulates blood serotonin levels by ensuring rapid high affinity uptake of serotonin from plasma to platelets, where it is further stored in dense granules via vesicular monoamine transporters and then released upon stimulation. Mechanistically, the transport cycle starts with an outward-open conformation having Na1(+) and Cl(-) sites occupied. The binding of a second extracellular Na2(+) ion and serotonin substrate leads to structural changes to outward-occluded to inward-occluded to inward-open, where the Na2(+) ion and serotonin are released into the cytosol. Binding of intracellular K(+) ion induces conformational transitions to inward-occluded to outward-open and completes the cycle by releasing K(+) possibly together with a proton bound to Asp-98 into the extracellular compartment. Na1(+) and Cl(-) ions remain bound throughout the transport cycle. Additionally, displays serotonin-induced channel-like conductance for monovalent cations, mainly Na(+) ions. The channel activity is uncoupled from the transport cycle and may contribute to the membrane resting potential or excitability. The polypeptide is Sodium-dependent serotonin transporter (Mus musculus (Mouse)).